Here is a 164-residue protein sequence, read N- to C-terminus: Peptidyl-prolyl cis-trans isomerase B (164 aa).

The region spanning methionine 1–valine 162 is the PPIase cyclophilin-type domain.

It belongs to the cyclophilin-type PPIase family.

It is found in the cytoplasm. The catalysed reaction is [protein]-peptidylproline (omega=180) = [protein]-peptidylproline (omega=0). With respect to regulation, inhibition by cyclosporin A with a Ki of 25 to 50 mu-mol, a concentration 1000-fold higher than that required for eukaryotic PPIases. Functionally, PPIases accelerate the folding of proteins. It catalyzes the cis-trans isomerization of proline imidic peptide bonds in oligopeptides. The protein is Peptidyl-prolyl cis-trans isomerase B (ppiB) of Escherichia coli (strain K12).